Here is a 322-residue protein sequence, read N- to C-terminus: Cytochrome f (322 aa).

The N-terminal stretch at 1–36 (MQKNRNTFSWVKEQMTRCISVSMMIYVITRASISNA) is a signal peptide. Tyr-37, Cys-57, Cys-60, and His-61 together coordinate heme. The helical transmembrane segment at 288-308 (IQGLLFFLASVILAQIFLVLK) threads the bilayer.

It belongs to the cytochrome f family. As to quaternary structure, the 4 large subunits of the cytochrome b6-f complex are cytochrome b6, subunit IV (17 kDa polypeptide, petD), cytochrome f and the Rieske protein, while the 4 small subunits are PetG, PetL, PetM and PetN. The complex functions as a dimer. Requires heme as cofactor.

The protein resides in the plastid. It is found in the chloroplast thylakoid membrane. In terms of biological role, component of the cytochrome b6-f complex, which mediates electron transfer between photosystem II (PSII) and photosystem I (PSI), cyclic electron flow around PSI, and state transitions. In Nymphaea alba (White water-lily), this protein is Cytochrome f.